A 253-amino-acid chain; its full sequence is Troponin T, fast skeletal muscle isoforms (253 aa).

Residues 1–25 (MSDTEEVEHGEEEYEEEEEVQEEEV) are compositionally biased toward acidic residues. Disordered regions lie at residues 1 to 58 (MSDT…DIQK) and 97 to 178 (RAER…VLAE). Residue Ser2 is modified to N-acetylserine. Basic and acidic residues-rich tracts occupy residues 46–58 (PEGE…DIQK), 97–139 (RAER…DDLK), and 167–178 (TARETKKKVLAE).

The protein belongs to the troponin T family.

Functionally, troponin T is the tropomyosin-binding subunit of troponin, the thin filament regulatory complex which confers calcium-sensitivity to striated muscle actomyosin ATPase activity. This is Troponin T, fast skeletal muscle isoforms (TNNT3) from Coturnix japonica (Japanese quail).